Consider the following 148-residue polypeptide: MTKKKKIRVVTGGVFDILHVGHIHFLKQAKELGDELVVIVAHDKTVEERKGRRPINSMYERAEVLKALKMVDEVVIGEPNCISFEIVKQLNPDIIALGPDQNFDVSALKEELKKKNINAEVIRIPYAYKSDVAKTSKIIQKIVETFCE.

ATP contacts are provided by residues 14–15 (VF), 19–22 (HVGH), and aspartate 100.

Belongs to the archaeal FAD synthase family. As to quaternary structure, homodimer. The cofactor is a divalent metal cation.

It carries out the reaction FMN + ATP + H(+) = FAD + diphosphate. Its pathway is cofactor biosynthesis; FAD biosynthesis; FAD from FMN: step 1/1. In terms of biological role, catalyzes the transfer of the AMP portion of ATP to flavin mononucleotide (FMN) to produce flavin adenine dinucleotide (FAD) coenzyme. In Thermococcus sibiricus (strain DSM 12597 / MM 739), this protein is FAD synthase.